A 724-amino-acid chain; its full sequence is Probable dipeptidyl-peptidase 5 (724 aa).

An N-terminal signal peptide occupies residues 1 to 19; sequence MGALTWLSVVAAAASTALA. N-linked (GlcNAc...) asparagine glycosylation is found at asparagine 76, asparagine 97, asparagine 154, asparagine 257, asparagine 383, and asparagine 453. The active-site Charge relay system is serine 563. N-linked (GlcNAc...) asparagine glycosylation occurs at asparagine 610. Active-site charge relay system residues include aspartate 646 and histidine 678.

It belongs to the peptidase S9C family.

The protein resides in the secreted. Functionally, extracellular dipeptidyl-peptidase which removes N-terminal dipeptides sequentially from polypeptides having unsubstituted N-termini. The chain is Probable dipeptidyl-peptidase 5 (dpp5) from Aspergillus clavatus (strain ATCC 1007 / CBS 513.65 / DSM 816 / NCTC 3887 / NRRL 1 / QM 1276 / 107).